Here is a 252-residue protein sequence, read N- to C-terminus: MTKVILSGCSGKMGKMISQSVNNFEGLSIVAGIDKFKDESLKYPIFENITECDVNADVVLDFSRPDALDSLLSYSKDNNLPVVLCTTGYSKEQLDKIDEYSKIVPVFHSANMSIGINLINNILKDISAMLYENYDIEIIEKHHNQKVDAPSGTALLLGNTIKDSIKEDTVFNKGRNGIKKREKNEIGIHAIRGGSIVGEHEVIFAGAGEIIELKHTALSREVFAMGALKACEYMAGKNNGLYTMDDVIKSKN.

Residues 8–13, 85–87, and 109–112 contribute to the NAD(+) site; these read GCSGKM, CTT, and SANM. The Proton donor/acceptor role is filled by H142. H143 serves as a coordination point for (S)-2,3,4,5-tetrahydrodipicolinate. K146 serves as the catalytic Proton donor. 152 to 153 contributes to the (S)-2,3,4,5-tetrahydrodipicolinate binding site; it reads GT.

This sequence belongs to the DapB family.

The protein localises to the cytoplasm. It catalyses the reaction (S)-2,3,4,5-tetrahydrodipicolinate + NAD(+) + H2O = (2S,4S)-4-hydroxy-2,3,4,5-tetrahydrodipicolinate + NADH + H(+). It carries out the reaction (S)-2,3,4,5-tetrahydrodipicolinate + NADP(+) + H2O = (2S,4S)-4-hydroxy-2,3,4,5-tetrahydrodipicolinate + NADPH + H(+). It participates in amino-acid biosynthesis; L-lysine biosynthesis via DAP pathway; (S)-tetrahydrodipicolinate from L-aspartate: step 4/4. In terms of biological role, catalyzes the conversion of 4-hydroxy-tetrahydrodipicolinate (HTPA) to tetrahydrodipicolinate. The sequence is that of 4-hydroxy-tetrahydrodipicolinate reductase from Clostridium novyi (strain NT).